Consider the following 342-residue polypeptide: Ketol-acid reductoisomerase (NADP(+)) (342 aa).

The KARI N-terminal Rossmann domain occupies 2–182; sequence AEMFYDDDAD…GGLRAGGIKT (181 aa). Residues 25 to 28, lysine 48, serine 51, serine 53, and 83 to 86 contribute to the NADP(+) site; these read FGSQ and DHLQ. Histidine 108 is a catalytic residue. Residue glycine 134 participates in NADP(+) binding. In terms of domain architecture, KARI C-terminal knotted spans 183–328; sequence TFTEETETDL…RELRKLMAWV (146 aa). 4 residues coordinate Mg(2+): aspartate 191, glutamate 195, glutamate 227, and glutamate 231. A substrate-binding site is contributed by serine 252.

The protein belongs to the ketol-acid reductoisomerase family. Requires Mg(2+) as cofactor.

It carries out the reaction (2R)-2,3-dihydroxy-3-methylbutanoate + NADP(+) = (2S)-2-acetolactate + NADPH + H(+). The enzyme catalyses (2R,3R)-2,3-dihydroxy-3-methylpentanoate + NADP(+) = (S)-2-ethyl-2-hydroxy-3-oxobutanoate + NADPH + H(+). It participates in amino-acid biosynthesis; L-isoleucine biosynthesis; L-isoleucine from 2-oxobutanoate: step 2/4. It functions in the pathway amino-acid biosynthesis; L-valine biosynthesis; L-valine from pyruvate: step 2/4. Involved in the biosynthesis of branched-chain amino acids (BCAA). Catalyzes an alkyl-migration followed by a ketol-acid reduction of (S)-2-acetolactate (S2AL) to yield (R)-2,3-dihydroxy-isovalerate. In the isomerase reaction, S2AL is rearranged via a Mg-dependent methyl migration to produce 3-hydroxy-3-methyl-2-ketobutyrate (HMKB). In the reductase reaction, this 2-ketoacid undergoes a metal-dependent reduction by NADPH to yield (R)-2,3-dihydroxy-isovalerate. This Kineococcus radiotolerans (strain ATCC BAA-149 / DSM 14245 / SRS30216) protein is Ketol-acid reductoisomerase (NADP(+)).